The primary structure comprises 281 residues: Protein ZAR1-like 1.L (281 aa).

The 3CxxC-type zinc-finger motif lies at 183–267; that stretch reads QKYGFFHCKN…QELCGRCKGQ (85 aa).

This sequence belongs to the ZAR1 family. In terms of assembly, component of a cytoplasmic ribonucleoprotein complex together with eif4enif1/4E-T and cpeb1. In terms of tissue distribution, expressed in oocytes.

The protein resides in the cytoplasm. It is found in the cytoplasmic ribonucleoprotein granule. Its function is as follows. mRNA-binding protein required for maternal mRNA storage, translation and degradation during oocyte maturation. Controls timing of meiosis during oogenesis. Probably promotes formation of some phase-separated membraneless compartment that stores maternal mRNAs in oocytes: acts by undergoing liquid-liquid phase separation upon binding to maternal mRNAs. Binds to the 3'-UTR of maternal mRNAs, inhibiting their translation. The protein is Protein ZAR1-like 1.L of Xenopus laevis (African clawed frog).